A 1210-amino-acid polypeptide reads, in one-letter code: MAAQSSLYNDDRNLLRIREKERRNQEAHQEKEAFPEKIPLFGEPYKTAKGDELSSRIQNMLGNYEEVKEFLSTKSHTHRLDASENRLGKPKYPLIPDKGSSIPSSSFHTSVHHQSIHTPASGPLSVGNISHNPKMAQPRTEPMPSLHAKSCGPPDSQHLTQDRLGQEGFGSSHHKKGDRRADGDHCASVTDSAPERELSPLISLPSPVPPLSPIHSNQQTLPRTQGSSKVHGSSNNSKGYCPAKSPKDLAVKVHDKETPQDSLVAPAQPPSQTFPPPSLPSKSVAMQQKPTAYVRPMDGQDQAPSESPELKPLPEDYRQQTFEKTDLKVPAKAKLTKLKMPSQSVEQTYSNEVHCVEEILKEMTHSWPPPLTAIHTPSTAEPSKFPFPTKDSQHVSSVTQNQKQYDTSSKTHSNSQQGTSSMLEDDLQLSDSEDSDSEQTPEKPPSSSAPPSAPQSLPEPVASAHSSSAESESTSDSDSSSDSESESSSSDSEENEPLETPAPEPEPPTTNKWQLDNWLTKVSQPAAPPEGPRSTEPPRRHPESKGSSDSATSQEHSESKDPPPKSSSKAPRAPPEAPHPGKRSCQKSPAQQEPPQRQTVGTKQPKKPVKASARAGSRTSLQGEREPGLLPYGSRDQTSKDKPKVKTKGRPRAAASNEPKPAVPPSSEKKKHKSSLPAPSKALSGPEPAKDNVEDRTPEHFALVPLTESQGPPHSGSGSRTSGCRQAVVVQEDSRKDRLPLPLRDTKLLSPLRDTPPPQSLMVKITLDLLSRIPQPPGKGSRQRKAEDKQPPAGKKHSSEKRSSDSSSKLAKKRKGEAERDCDNKKIRLEKEIKSQSSSSSSSHKESSKTKPSRPSSQSSKKEMLPPPPVSSSSQKPAKPALKRSRREADTCGQDPPKSASSTKSNHKDSSIPKQRRVEGKGSRSSSEHKGSSGDTANPFPVPSLPNGNSKPGKPQVKFDKQQADLHMREAKKMKQKAELMTDRVGKAFKYLEAVLSFIECGIATESESQSSKSAYSVYSETVDLIKFIMSLKSFSDATAPTQEKIFAVLCMRCQSILNMAMFRCKKDIAIKYSRTLNKHFESSSKVAQAPSPCIASTGTPSPLSPMPSPASSVGSQSSAGSVGSSGVAATISTPVTIQNMTSSYVTITSHVLTAFDLWEQAEALTRKNKEFFARLSTNVCTLALNSSLVDLVHYTRQGFQQLQELTKTP.

4 disordered regions span residues 1–45, 73–314, 366–957, and 1098–1119; these read MAAQ…GEPY, TKSH…KPLP, SWPP…KPQV, and TGTP…SQSS. 2 stretches are compositionally biased toward basic and acidic residues: residues 9–35 and 78–87; these read NDDR…EAFP and HRLDASENRL. 3 positions are modified to phosphoserine: Ser-199, Ser-206, and Ser-212. Residues 215–238 show a composition bias toward polar residues; sequence HSNQQTLPRTQGSSKVHGSSNNSK. At Thr-220 the chain carries Phosphothreonine. Residues 245–259 show a composition bias toward basic and acidic residues; it reads SPKDLAVKVHDKETP. Residues 267-279 show a composition bias toward pro residues; the sequence is AQPPSQTFPPPSL. The segment covering 394–419 has biased composition (polar residues); it reads HVSSVTQNQKQYDTSSKTHSNSQQGT. The segment covering 423 to 439 has biased composition (acidic residues); it reads LEDDLQLSDSEDSDSEQ. Over residues 442–453 the composition is skewed to pro residues; sequence EKPPSSSAPPSA. Positions 454–472 are enriched in low complexity; the sequence is PQSLPEPVASAHSSSAESE. The segment covering 473 to 497 has biased composition (acidic residues); that stretch reads STSDSDSSSDSESESSSSDSEENEP. A compositionally biased stretch (basic and acidic residues) spans 536–546; the sequence is EPPRRHPESKG. Residues 586–602 are compositionally biased toward polar residues; that stretch reads QKSPAQQEPPQRQTVGT. Phosphoserine is present on Ser-588. Position 681 is an N6-acetyllysine (Lys-681). A compositionally biased stretch (basic and acidic residues) spans 688 to 699; it reads PAKDNVEDRTPE. Phosphothreonine is present on Thr-697. Positions 707 to 724 are enriched in polar residues; that stretch reads TESQGPPHSGSGSRTSGC. Residues 732–747 are compositionally biased toward basic and acidic residues; sequence EDSRKDRLPLPLRDTK. Position 750 is a phosphoserine (Ser-750). Phosphothreonine is present on Thr-755. Basic and acidic residues predominate over residues 816 to 834; that stretch reads GEAERDCDNKKIRLEKEIK. Over residues 871-880 the composition is skewed to low complexity; the sequence is SSSSQKPAKP. Basic and acidic residues predominate over residues 906–932; that stretch reads NHKDSSIPKQRRVEGKGSRSSSEHKGS. Low complexity predominate over residues 1110-1119; sequence PASSVGSQSS.

The protein belongs to the AF4 family. As to quaternary structure, component of the super elongation complex (SEC), at least composed of EAF1, EAF2, CDK9, MLLT3/AF9, AFF (AFF1 or AFF4), the P-TEFb complex and ELL (ELL, ELL2 or ELL3).

Its subcellular location is the nucleus. The sequence is that of AF4/FMR2 family member 1 (AFF1) from Homo sapiens (Human).